Consider the following 870-residue polypeptide: Valine--tRNA ligase (870 aa).

The 'HIGH' region motif lies at P42–H52. The 'KMSKS' region motif lies at K527–S531. K530 lines the ATP pocket. Residues L800 to G870 adopt a coiled-coil conformation.

This sequence belongs to the class-I aminoacyl-tRNA synthetase family. ValS type 1 subfamily. In terms of assembly, monomer.

The protein localises to the cytoplasm. It carries out the reaction tRNA(Val) + L-valine + ATP = L-valyl-tRNA(Val) + AMP + diphosphate. Functionally, catalyzes the attachment of valine to tRNA(Val). As ValRS can inadvertently accommodate and process structurally similar amino acids such as threonine, to avoid such errors, it has a 'posttransfer' editing activity that hydrolyzes mischarged Thr-tRNA(Val) in a tRNA-dependent manner. The chain is Valine--tRNA ligase from Campylobacter jejuni (strain RM1221).